Reading from the N-terminus, the 298-residue chain is Nucleotide-binding protein Dred_3054 (298 aa).

Residue 20–27 (GMSGAGKT) participates in ATP binding. Residue 71-74 (DIRG) participates in GTP binding.

Belongs to the RapZ-like family.

In terms of biological role, displays ATPase and GTPase activities. The sequence is that of Nucleotide-binding protein Dred_3054 from Desulforamulus reducens (strain ATCC BAA-1160 / DSM 100696 / MI-1) (Desulfotomaculum reducens).